The sequence spans 432 residues: Enolase 2 (432 aa).

Q163 provides a ligand contact to (2R)-2-phosphoglycerate. The active-site Proton donor is the E205. The Mg(2+) site is built by D242, E287, and D314. (2R)-2-phosphoglycerate-binding residues include K339, R368, S369, and K390. K339 acts as the Proton acceptor in catalysis.

It belongs to the enolase family. As to quaternary structure, homodimer. Probably forms octamers. Mg(2+) is required as a cofactor.

The protein localises to the cytoplasm. It localises to the secreted. Its subcellular location is the cell surface. It catalyses the reaction (2R)-2-phosphoglycerate = phosphoenolpyruvate + H2O. It functions in the pathway carbohydrate degradation; glycolysis; pyruvate from D-glyceraldehyde 3-phosphate: step 4/5. Catalyzes the reversible conversion of 2-phosphoglycerate (2-PG) into phosphoenolpyruvate (PEP). It is essential for the degradation of carbohydrates via glycolysis. In Lactobacillus gasseri (strain ATCC 33323 / DSM 20243 / BCRC 14619 / CIP 102991 / JCM 1131 / KCTC 3163 / NCIMB 11718 / NCTC 13722 / AM63), this protein is Enolase 2.